Here is a 175-residue protein sequence, read N- to C-terminus: NADH-ubiquinone oxidoreductase chain 6 (175 aa).

The next 6 helical transmembrane spans lie at 1 to 21, 25 to 45, 47 to 67, 88 to 108, 115 to 137, and 149 to 169; these read MMTYVVFILSIVFVIGLIGSP, SPIYGGLGLIVSGGAGCGMVL, FGGSFLGLMVFLVYLGGMLVV, VVLGAFLLGLMMEFLAVLYVL, LVFKFSGLGDWVVYGMSDFGVFS, and YGVWLVVVTGWSLFVGVVVIM.

The protein belongs to the complex I subunit 6 family. Core subunit of respiratory chain NADH dehydrogenase (Complex I) which is composed of 45 different subunits.

Its subcellular location is the mitochondrion inner membrane. It carries out the reaction a ubiquinone + NADH + 5 H(+)(in) = a ubiquinol + NAD(+) + 4 H(+)(out). Its function is as follows. Core subunit of the mitochondrial membrane respiratory chain NADH dehydrogenase (Complex I) which catalyzes electron transfer from NADH through the respiratory chain, using ubiquinone as an electron acceptor. Essential for the catalytic activity and assembly of complex I. This chain is NADH-ubiquinone oxidoreductase chain 6 (MT-ND6), found in Hippopotamus amphibius (Hippopotamus).